Reading from the N-terminus, the 339-residue chain is Ketol-acid reductoisomerase (NADP(+)) (339 aa).

The region spanning 1 to 182 is the KARI N-terminal Rossmann domain; it reads MRVYYDSDAD…GGGRAGIIET (182 aa). Residues 24–27, R48, S51, and 83–86 each bind NADP(+); these read YGSQ and DEGQ. The active site involves H108. G134 contributes to the NADP(+) binding site. Residues 183 to 328 enclose the KARI C-terminal knotted domain; the sequence is TFKEECETDL…EKLRAMMPWI (146 aa). Residues D191, E195, E227, and E231 each coordinate Mg(2+). S252 is a binding site for substrate.

Belongs to the ketol-acid reductoisomerase family. Requires Mg(2+) as cofactor.

The enzyme catalyses (2R)-2,3-dihydroxy-3-methylbutanoate + NADP(+) = (2S)-2-acetolactate + NADPH + H(+). The catalysed reaction is (2R,3R)-2,3-dihydroxy-3-methylpentanoate + NADP(+) = (S)-2-ethyl-2-hydroxy-3-oxobutanoate + NADPH + H(+). The protein operates within amino-acid biosynthesis; L-isoleucine biosynthesis; L-isoleucine from 2-oxobutanoate: step 2/4. Its pathway is amino-acid biosynthesis; L-valine biosynthesis; L-valine from pyruvate: step 2/4. In terms of biological role, involved in the biosynthesis of branched-chain amino acids (BCAA). Catalyzes an alkyl-migration followed by a ketol-acid reduction of (S)-2-acetolactate (S2AL) to yield (R)-2,3-dihydroxy-isovalerate. In the isomerase reaction, S2AL is rearranged via a Mg-dependent methyl migration to produce 3-hydroxy-3-methyl-2-ketobutyrate (HMKB). In the reductase reaction, this 2-ketoacid undergoes a metal-dependent reduction by NADPH to yield (R)-2,3-dihydroxy-isovalerate. The protein is Ketol-acid reductoisomerase (NADP(+)) of Acidiphilium cryptum (strain JF-5).